The sequence spans 707 residues: NAD(P)H-quinone oxidoreductase subunit 5, chloroplastic (707 aa).

15 helical membrane-spanning segments follow: residues 9 to 29 (WIIP…LLLF), 40 to 60 (WAFP…DLSI), 89 to 109 (IDSL…FVLI), 125 to 145 (FAYM…SNLI), 147 to 167 (IYIF…FWFT), 184 to 204 (IGDF…GSFE), 219 to 239 (NEVH…GAVA), 258 to 278 (TPIS…FLVA), 280 to 300 (LLPL…IGII), 327 to 347 (LGYM…FHLI), 354 to 374 (ALLF…VGYS), 396 to 416 (IAFL…CFWS), 425 to 445 (WLYS…TAFY), 538 to 558 (LFPM…AIPL), and 592 to 612 (FLTN…TAFL).

Belongs to the complex I subunit 5 family. In terms of assembly, NDH is composed of at least 16 different subunits, 5 of which are encoded in the nucleus.

It is found in the plastid. It localises to the chloroplast thylakoid membrane. It carries out the reaction a plastoquinone + NADH + (n+1) H(+)(in) = a plastoquinol + NAD(+) + n H(+)(out). The catalysed reaction is a plastoquinone + NADPH + (n+1) H(+)(in) = a plastoquinol + NADP(+) + n H(+)(out). Its function is as follows. NDH shuttles electrons from NAD(P)H:plastoquinone, via FMN and iron-sulfur (Fe-S) centers, to quinones in the photosynthetic chain and possibly in a chloroplast respiratory chain. The immediate electron acceptor for the enzyme in this species is believed to be plastoquinone. Couples the redox reaction to proton translocation, and thus conserves the redox energy in a proton gradient. The sequence is that of NAD(P)H-quinone oxidoreductase subunit 5, chloroplastic (ndhF) from Malvaviscus arboreus (Turk's cap).